We begin with the raw amino-acid sequence, 157 residues long: Small ribosomal subunit protein uS7cz/uS7cy (157 aa).

The protein belongs to the universal ribosomal protein uS7 family. In terms of assembly, part of the 30S ribosomal subunit.

The protein localises to the plastid. The protein resides in the chloroplast. One of the primary rRNA binding proteins, it binds directly to 16S rRNA where it nucleates assembly of the head domain of the 30S subunit. The sequence is that of Small ribosomal subunit protein uS7cz/uS7cy (rps7-A) from Welwitschia mirabilis (Tree tumbo).